The following is a 407-amino-acid chain: tRNA(Ile)-lysidine synthase (407 aa).

36–41 lines the ATP pocket; that stretch reads SGGRDS.

This sequence belongs to the tRNA(Ile)-lysidine synthase family.

It is found in the cytoplasm. It catalyses the reaction cytidine(34) in tRNA(Ile2) + L-lysine + ATP = lysidine(34) in tRNA(Ile2) + AMP + diphosphate + H(+). In terms of biological role, ligates lysine onto the cytidine present at position 34 of the AUA codon-specific tRNA(Ile) that contains the anticodon CAU, in an ATP-dependent manner. Cytidine is converted to lysidine, thus changing the amino acid specificity of the tRNA from methionine to isoleucine. This chain is tRNA(Ile)-lysidine synthase, found in Tropheryma whipplei (strain TW08/27) (Whipple's bacillus).